A 114-amino-acid chain; its full sequence is Cell division protein FtsB (114 aa).

At 1 to 3 (MGK) the chain is on the cytoplasmic side. Residues 4–21 (LTLLLVVLLGWLQYSLWV) form a helical membrane-spanning segment. The Periplasmic portion of the chain corresponds to 22 to 114 (GKNGVHDYMR…ASYPSVTASH (93 aa)). Residues 31-62 (RVKQDVATQQANNAKLKSRNDQLFAEIDDLNG) adopt a coiled-coil conformation.

Belongs to the FtsB family. In terms of assembly, part of a complex composed of FtsB, FtsL and FtsQ.

The protein localises to the cell inner membrane. Its function is as follows. Essential cell division protein. May link together the upstream cell division proteins, which are predominantly cytoplasmic, with the downstream cell division proteins, which are predominantly periplasmic. The protein is Cell division protein FtsB of Edwardsiella ictaluri (strain 93-146).